A 370-amino-acid chain; its full sequence is tRNA pseudouridine synthase D (370 aa).

The active-site Nucleophile is the Asp77. Residues 152-297 enclose the TRUD domain; it reads GVPNYFGEQR…LEQERRPLLL (146 aa).

This sequence belongs to the pseudouridine synthase TruD family.

It carries out the reaction uridine(13) in tRNA = pseudouridine(13) in tRNA. Functionally, responsible for synthesis of pseudouridine from uracil-13 in transfer RNAs. In Shewanella oneidensis (strain ATCC 700550 / JCM 31522 / CIP 106686 / LMG 19005 / NCIMB 14063 / MR-1), this protein is tRNA pseudouridine synthase D.